The primary structure comprises 122 residues: Small ribosomal subunit protein uS13 (122 aa).

The segment at 95-122 (SLPVRGQRTHTNARTRKGPAKSIAGKKK) is disordered.

It belongs to the universal ribosomal protein uS13 family. Part of the 30S ribosomal subunit. Forms a loose heterodimer with protein S19. Forms two bridges to the 50S subunit in the 70S ribosome.

Its function is as follows. Located at the top of the head of the 30S subunit, it contacts several helices of the 16S rRNA. In the 70S ribosome it contacts the 23S rRNA (bridge B1a) and protein L5 of the 50S subunit (bridge B1b), connecting the 2 subunits; these bridges are implicated in subunit movement. Contacts the tRNAs in the A and P-sites. The chain is Small ribosomal subunit protein uS13 from Mesorhizobium japonicum (strain LMG 29417 / CECT 9101 / MAFF 303099) (Mesorhizobium loti (strain MAFF 303099)).